Here is a 350-residue protein sequence, read N- to C-terminus: Glyceraldehyde-3-phosphate dehydrogenase (350 aa).

NAD(+) contacts are provided by residues 13 to 14 (TI) and G118. 147–149 (SCN) contributes to the D-glyceraldehyde 3-phosphate binding site. C148 acts as the Nucleophile in catalysis. An NAD(+)-binding site is contributed by R176. A D-glyceraldehyde 3-phosphate-binding site is contributed by 202 to 203 (HG). Q309 lines the NAD(+) pocket. Residues 327–350 (LEEDPEASMDATDSALGVLNSPPL) are disordered.

Belongs to the glyceraldehyde-3-phosphate dehydrogenase family. As to quaternary structure, homotetramer.

It localises to the cytoplasm. The catalysed reaction is D-glyceraldehyde 3-phosphate + phosphate + NADP(+) = (2R)-3-phospho-glyceroyl phosphate + NADPH + H(+). The enzyme catalyses D-glyceraldehyde 3-phosphate + phosphate + NAD(+) = (2R)-3-phospho-glyceroyl phosphate + NADH + H(+). Its pathway is carbohydrate degradation; glycolysis; pyruvate from D-glyceraldehyde 3-phosphate: step 1/5. The protein is Glyceraldehyde-3-phosphate dehydrogenase of Methanopyrus kandleri (strain AV19 / DSM 6324 / JCM 9639 / NBRC 100938).